A 385-amino-acid chain; its full sequence is Nuclear hormone receptor family member nhr-68 (385 aa).

Residues 4-79 constitute a DNA-binding region (nuclear receptor); it reads KEVCLVCQDF…VGMDKTSLQA (76 aa). 2 NR C4-type zinc fingers span residues 7 to 27 and 43 to 62; these read CLVC…CNGC and CQFD…CRFC. The tract at residues 81 to 110 is disordered; it reads RDPIGYTKRNKKTLRHPMNELSGDESNSCT. An NR LBD domain is found at 145–384; the sequence is PKRSLKQALC…SFAKELIFGD (240 aa). Residues 373 to 384 form an AF-2 region; sequence FTSFAKELIFGD.

The protein belongs to the nuclear hormone receptor family.

Its subcellular location is the nucleus. Functionally, probable transcription factor that acts in a feed-forward loop with nhr-10 to activate genes, including itself, involved in the vitamin B12-independent breakdown of the short-chain fatty acid propionate. This pathway is triggered in response to a diet low in vitamin B12, when canonical vitamin B12-dependent propionate breakdown cannot function; the resulting accumulation of propionate is probably sensed by nhr-68 and/or nhr-10. This is Nuclear hormone receptor family member nhr-68 from Caenorhabditis elegans.